A 119-amino-acid chain; its full sequence is Hydrogenase maturation factor HypA (119 aa).

His-2 serves as a coordination point for Ni(2+). 4 residues coordinate Zn(2+): Cys-73, Cys-76, Cys-89, and Cys-92.

This sequence belongs to the HypA/HybF family.

In terms of biological role, involved in the maturation of [NiFe] hydrogenases. Required for nickel insertion into the metal center of the hydrogenase. This Dehalococcoides mccartyi (strain ATCC BAA-2100 / JCM 16839 / KCTC 5957 / BAV1) protein is Hydrogenase maturation factor HypA.